The following is a 217-amino-acid chain: MVIGLTGGIASGKSTVVDFLISEGYQVIDADKVVRQLQEPGGKLYKAIVETYGLDFIADNGQLNREKLGALVFSDSKEREKLSNLQDEIIRTELYDRRDDLLKKMTDKSVSKNFDSKSQGKNLSVNKPIFMDIPLLIEYNYTGFDEIWLVSLPEKIQLERLMARNKFTEEEAKKRISSQMPLSEKQKVADVILDNFGTIEALKKQIQRELARIEEQK.

Residues 2 to 217 (VIGLTGGIAS…RELARIEEQK (216 aa)) form the DPCK domain. 10–15 (ASGKST) is a binding site for ATP.

It belongs to the CoaE family.

It is found in the cytoplasm. The catalysed reaction is 3'-dephospho-CoA + ATP = ADP + CoA + H(+). It participates in cofactor biosynthesis; coenzyme A biosynthesis; CoA from (R)-pantothenate: step 5/5. Functionally, catalyzes the phosphorylation of the 3'-hydroxyl group of dephosphocoenzyme A to form coenzyme A. The chain is Dephospho-CoA kinase from Lactococcus lactis subsp. lactis (strain IL1403) (Streptococcus lactis).